Consider the following 158-residue polypeptide: MTELKLIHIFTDGSCLGNPGPGGYGIVMNYKGHTKEMSDGFSLTTNNRMELLAPIVALEALKEPCKIILTSDSQYMRQGIMTWIHGWKKKGWMTSNRTPVKNVDLWKRLDKAAQLHQIDWRWVKGHAGHAENERCDQLARAAAEANPTQIDTGYQAES.

One can recognise an RNase H type-1 domain in the interval 3–144; sequence ELKLIHIFTD…CDQLARAAAE (142 aa). The Mg(2+) site is built by Asp-12, Glu-50, Asp-72, and Asp-136.

It belongs to the RNase H family. In terms of assembly, monomer. The cofactor is Mg(2+).

It is found in the cytoplasm. The enzyme catalyses Endonucleolytic cleavage to 5'-phosphomonoester.. Its function is as follows. Endonuclease that specifically degrades the RNA of RNA-DNA hybrids. This Shewanella oneidensis (strain ATCC 700550 / JCM 31522 / CIP 106686 / LMG 19005 / NCIMB 14063 / MR-1) protein is Ribonuclease HI.